A 259-amino-acid polypeptide reads, in one-letter code: Large ribosomal subunit protein uL4 (259 aa).

The tract at residues tryptophan 47–glycine 67 is disordered.

This sequence belongs to the universal ribosomal protein uL4 family. In terms of assembly, part of the 50S ribosomal subunit.

Its function is as follows. One of the primary rRNA binding proteins, this protein initially binds near the 5'-end of the 23S rRNA. It is important during the early stages of 50S assembly. It makes multiple contacts with different domains of the 23S rRNA in the assembled 50S subunit and ribosome. Functionally, forms part of the polypeptide exit tunnel. This Methanosphaera stadtmanae (strain ATCC 43021 / DSM 3091 / JCM 11832 / MCB-3) protein is Large ribosomal subunit protein uL4.